A 208-amino-acid polypeptide reads, in one-letter code: Outer-membrane lipoprotein carrier protein (208 aa).

The signal sequence occupies residues 1–21; that stretch reads MKKLNTLLLVLGSLVATPSFA. Residues 188-208 are disordered; that stretch reads KSTFEFTPPEGVEIDDQSNGE. Acidic residues predominate over residues 199–208; it reads VEIDDQSNGE.

The protein belongs to the LolA family. As to quaternary structure, monomer.

The protein localises to the periplasm. Functionally, participates in the translocation of lipoproteins from the inner membrane to the outer membrane. Only forms a complex with a lipoprotein if the residue after the N-terminal Cys is not an aspartate (The Asp acts as a targeting signal to indicate that the lipoprotein should stay in the inner membrane). This Pseudoalteromonas translucida (strain TAC 125) protein is Outer-membrane lipoprotein carrier protein.